We begin with the raw amino-acid sequence, 342 residues long: Dihydroorotase (342 aa).

Zn(2+) is bound by residues H13 and H15. Substrate contacts are provided by residues H15–R17 and N41. K97, H134, and H172 together coordinate Zn(2+). At K97 the chain carries N6-carboxylysine. H134 contacts substrate. Position 217 (L217) interacts with substrate. D245 lines the Zn(2+) pocket. Residue D245 is part of the active site. The substrate site is built by H249 and A261.

It belongs to the metallo-dependent hydrolases superfamily. DHOase family. Class II DHOase subfamily. Homodimer. Zn(2+) is required as a cofactor.

It catalyses the reaction (S)-dihydroorotate + H2O = N-carbamoyl-L-aspartate + H(+). Its pathway is pyrimidine metabolism; UMP biosynthesis via de novo pathway; (S)-dihydroorotate from bicarbonate: step 3/3. Functionally, catalyzes the reversible cyclization of carbamoyl aspartate to dihydroorotate. The sequence is that of Dihydroorotase from Shewanella loihica (strain ATCC BAA-1088 / PV-4).